The primary structure comprises 915 residues: Nitrate reductase [NADH] (915 aa).

The tract at residues 1–102 is disordered; the sequence is MAASVEPRQP…PRDEGTADAW (102 aa). Positions 16–26 are enriched in low complexity; that stretch reads APATAPTARAP. Acidic residues predominate over residues 57-71; it reads AEEEEDDDDEDDEGH. The span at 88-97 shows a compositional bias: basic and acidic residues; sequence PSTRDPRDEG. Residue Cys189 coordinates Mo-molybdopterin. Positions 538–613 constitute a Cytochrome b5 heme-binding domain; the sequence is DKQFTMSEVR…LDTYRIGELI (76 aa). The heme site is built by His573 and His596. Residues 654–767 form the FAD-binding FR-type domain; it reads REKVPCRLVD…KGPLGHVEYT (114 aa). FAD contacts are provided by residues 706–709, 723–727, Phe728, Phe735, 740–742, Ser791, and Thr794; these read RAYT, LVKVY, and LMT.

The protein belongs to the nitrate reductase family. In terms of assembly, homodimer. FAD is required as a cofactor. It depends on heme as a cofactor. The cofactor is Mo-molybdopterin.

It catalyses the reaction nitrite + NAD(+) + H2O = nitrate + NADH + H(+). In terms of biological role, nitrate reductase is a key enzyme involved in the first step of nitrate assimilation in plants, fungi and bacteria. The protein is Nitrate reductase [NADH] of Hordeum vulgare (Barley).